A 546-amino-acid polypeptide reads, in one-letter code: Membrane protein insertase YidC (546 aa).

A helical transmembrane segment spans residues 8–28; it reads ILLATVLSVGILILWQVIFPT. The segment at 31–70 is disordered; it reads APPKPAHPPAAEVAKPAAPASPAPGAAAPAVPAPPPDAPE. The span at 39 to 60 shows a compositional bias: low complexity; that stretch reads PAAEVAKPAAPASPAPGAAAPA. The next 5 helical transmembrane spans lie at 326–346, 356–376, 422–442, 459–479, and 498–518; these read IDYG…LYVM, WGVA…PLTY, LGGC…YAAL, LTAH…SFVM, and FFPG…TLYI.

It belongs to the OXA1/ALB3/YidC family. Type 1 subfamily. In terms of assembly, interacts with the Sec translocase complex via SecD. Specifically interacts with transmembrane segments of nascent integral membrane proteins during membrane integration.

It localises to the cell inner membrane. Required for the insertion and/or proper folding and/or complex formation of integral membrane proteins into the membrane. Involved in integration of membrane proteins that insert both dependently and independently of the Sec translocase complex, as well as at least some lipoproteins. Aids folding of multispanning membrane proteins. In Anaeromyxobacter dehalogenans (strain 2CP-1 / ATCC BAA-258), this protein is Membrane protein insertase YidC.